A 111-amino-acid chain; its full sequence is Ribonuclease P protein component (111 aa).

This sequence belongs to the RnpA family. Consists of a catalytic RNA component (M1 or rnpB) and a protein subunit.

It carries out the reaction Endonucleolytic cleavage of RNA, removing 5'-extranucleotides from tRNA precursor.. Functionally, RNaseP catalyzes the removal of the 5'-leader sequence from pre-tRNA to produce the mature 5'-terminus. It can also cleave other RNA substrates such as 4.5S RNA. The protein component plays an auxiliary but essential role in vivo by binding to the 5'-leader sequence and broadening the substrate specificity of the ribozyme. This is Ribonuclease P protein component from Streptococcus thermophilus (strain ATCC BAA-491 / LMD-9).